The primary structure comprises 186 residues: Elongation factor P (186 aa).

It belongs to the elongation factor P family.

It localises to the cytoplasm. The protein operates within protein biosynthesis; polypeptide chain elongation. Its function is as follows. Involved in peptide bond synthesis. Stimulates efficient translation and peptide-bond synthesis on native or reconstituted 70S ribosomes in vitro. Probably functions indirectly by altering the affinity of the ribosome for aminoacyl-tRNA, thus increasing their reactivity as acceptors for peptidyl transferase. In Prochlorococcus marinus (strain SARG / CCMP1375 / SS120), this protein is Elongation factor P.